Reading from the N-terminus, the 93-residue chain is MKDPNRPTLSVTLDGREVKLVPVIIEGYRLEVEGKNVTSFLSKTPPIMRAVGALEGRGDFGVGDLEVASDTRKWTVSGPVKQDTGKTDPAEKN.

Positions 73–93 are disordered; sequence KWTVSGPVKQDTGKTDPAEKN. Positions 83-93 are enriched in basic and acidic residues; that stretch reads DTGKTDPAEKN.

This is an uncharacterized protein from Rhodobacter capsulatus (Rhodopseudomonas capsulata).